A 100-amino-acid chain; its full sequence is Large ribosomal subunit protein uL23 (100 aa).

Belongs to the universal ribosomal protein uL23 family. Part of the 50S ribosomal subunit. Contacts protein L29, and trigger factor when it is bound to the ribosome.

Functionally, one of the early assembly proteins it binds 23S rRNA. One of the proteins that surrounds the polypeptide exit tunnel on the outside of the ribosome. Forms the main docking site for trigger factor binding to the ribosome. This is Large ribosomal subunit protein uL23 from Mycolicibacterium gilvum (strain PYR-GCK) (Mycobacterium gilvum (strain PYR-GCK)).